A 55-amino-acid chain; its full sequence is Large ribosomal subunit protein bL33A (55 aa).

Belongs to the bacterial ribosomal protein bL33 family.

The polypeptide is Large ribosomal subunit protein bL33A (Mycobacterium sp. (strain JLS)).